A 294-amino-acid polypeptide reads, in one-letter code: MAMSSGGSGGGVPEQEDSVLFRRGTGQSDDSDIWDDTALIKAYDKAVASFKHALKNGDICETSGKPKTTPKRKPAKKNKSQKKNTAASLQQWKVGDKCSAIWSEDGCIYPATIASIDFKRETCVVVYTGYGNREEQNLSDLLSPICEVANNIEQNAQENENESQVSTDESENSRSPGNKSDNIKPKSAPWNSFLPPPPPMPGPRLGPGKPGLKFNGPPPPPPPPPPHLLSCWLPPFPSGPPIIPPPPPICPDSLDDADALGSMLISWYMSGYHTGYYMGFRQNQKEGRCSHSLN.

Residues 1–12 are compositionally biased toward gly residues; sequence MAMSSGGSGGGV. The interval 1–32 is disordered; that stretch reads MAMSSGGSGGGVPEQEDSVLFRRGTGQSDDSD. Ala2 carries the N-acetylalanine modification. Phosphoserine; by PKA is present on residues Ser4, Ser5, and Ser8. Thr25 carries the post-translational modification Phosphothreonine. The interacts with GEMIN2 stretch occupies residues 26–51; the sequence is GQSDDSDIWDDTALIKAYDKAVASFK. A phosphoserine mark is found at Ser28 and Ser31. Lys51 participates in a covalent cross-link: Glycyl lysine isopeptide (Lys-Gly) (interchain with G-Cter in SUMO2). Positions 59 to 88 are disordered; it reads ICETSGKPKTTPKRKPAKKNKSQKKNTAAS. Residues 68–82 show a composition bias toward basic residues; the sequence is TTPKRKPAKKNKSQK. Thr69 is modified (phosphothreonine). Thr85 is modified (phosphothreonine; by PKA). The Tudor domain maps to 91–151; sequence QWKVGDKCSA…LSPICEVANN (61 aa). Residues 97-209 form a required for interaction with RPP20/POP7 region; the sequence is KCSAIWSEDG…MPGPRLGPGK (113 aa). A compositionally biased stretch (low complexity) spans 156 to 166; the sequence is AQENENESQVS. Positions 156-222 are disordered; it reads AQENENESQV…KFNGPPPPPP (67 aa). The residue at position 187 (Ser187) is a Phosphoserine; by PKA. Pro residues predominate over residues 194–204; it reads LPPPPPMPGPR. A compositionally biased stretch (low complexity) spans 206–215; the sequence is GPGKPGLKFN. A Glycyl lysine isopeptide (Lys-Gly) (interchain with G-Cter in SUMO2) cross-link involves residue Lys209. A P2 (binding site for SNRPB) region spans residues 240–267; that stretch reads PPIIPPPPPICPDSLDDADALGSMLISW. The segment at 252–280 is involved in homooligomerization; sequence DSLDDADALGSMLISWYMSGYHTGYYMGF. The required for interaction with SYNCRIP stretch occupies residues 279–294; that stretch reads GFRQNQKEGRCSHSLN.

Belongs to the SMN family. As to quaternary structure, homooligomer; may form higher order homooligomers in the dimer to octamer range. Part of the core SMN complex that contains SMN1, GEMIN2/SIP1, DDX20/GEMIN3, GEMIN4, GEMIN5, GEMIN6, GEMIN7, GEMIN8 and STRAP/UNRIP. Part of the SMN-Sm complex that contains SMN1, GEMIN2/SIP1, DDX20/GEMIN3, GEMIN4, GEMIN5, GEMIN6, GEMIN7, GEMIN8, STRAP/UNRIP and the Sm proteins SNRPB, SNRPD1, SNRPD2, SNRPD3, SNRPE, SNRPF and SNRPG. Component of an import snRNP complex composed of KPNB1, RNUT1, SMN1 and ZNF259. Interacts with DDX20, FBL, NOLA1, RNUT1, SYNCRIP and with several spliceosomal snRNP core Sm proteins, including SNRPB, SNRPD1, SNRPD2, SNRPD3, SNRPE and ILF3. Interacts with GEMIN2; the interaction is direct. Interacts with GEMIN3; the interaction is direct. Interacts with GEMIN8; the interaction is direct. Interacts with SNRPB; the interaction is direct. Interacts (via Tudor domain) with SNRPD1 (via C-terminus); the interaction is direct. Interacts with SNRPD2; the interaction is direct. Interacts (via Tudor domain) with SNRPD3 (via C-terminus); the interaction is direct. Interacts with SNRPE; the interaction is direct. Interacts with OSTF1, LSM10, LSM11 and RPP20/POP7. Interacts (via C-terminal region) with ZPR1 (via C-terminal region). Interacts (via Tudor domain) with COIL. Interacts with SETX; recruits SETX to POLR2A. Interacts with POLR2A (via the C-terminal domain (CTD)). Interacts with PRMT5. Interacts with XRN2. Interacts (via C-terminus) with FMR1 (via C-terminus); the interaction is direct and occurs in a RNA-independent manner. Interacts (via Tudor domain) with SF3B2 ('Arg-508'-methylated form). Interacts with WRAP53/TCAB1. Interacts (via Tudor domain) with ELAVL4 in an RNA-independent manner; the interaction is required for localization of ELAVL4 to RNA granules. Interacts with FRG1. Does not homooligomerize. Does not interact with SNRPB. In terms of tissue distribution, expressed in a wide variety of tissues. Expressed at high levels in brain, kidney and liver, moderate levels in skeletal and cardiac muscle, and low levels in fibroblasts and lymphocytes. Also seen at high levels in spinal cord. Present in osteoclasts and mononuclear cells (at protein level).

It localises to the nucleus. The protein localises to the gem. It is found in the cajal body. The protein resides in the cytoplasm. Its subcellular location is the cytoplasmic granule. It localises to the perikaryon. The protein localises to the cell projection. It is found in the neuron projection. The protein resides in the axon. Its subcellular location is the myofibril. It localises to the sarcomere. The protein localises to the z line. The SMN complex catalyzes the assembly of small nuclear ribonucleoproteins (snRNPs), the building blocks of the spliceosome, and thereby plays an important role in the splicing of cellular pre-mRNAs. Most spliceosomal snRNPs contain a common set of Sm proteins SNRPB, SNRPD1, SNRPD2, SNRPD3, SNRPE, SNRPF and SNRPG that assemble in a heptameric protein ring on the Sm site of the small nuclear RNA to form the core snRNP (Sm core). In the cytosol, the Sm proteins SNRPD1, SNRPD2, SNRPE, SNRPF and SNRPG are trapped in an inactive 6S pICln-Sm complex by the chaperone CLNS1A that controls the assembly of the core snRNP. To assemble core snRNPs, the SMN complex accepts the trapped 5Sm proteins from CLNS1A forming an intermediate. Within the SMN complex, SMN1 acts as a structural backbone and together with GEMIN2 it gathers the Sm complex subunits. Binding of snRNA inside 5Sm ultimately triggers eviction of the SMN complex, thereby allowing binding of SNRPD3 and SNRPB to complete assembly of the core snRNP. Ensures the correct splicing of U12 intron-containing genes that may be important for normal motor and proprioceptive neurons development. Also required for resolving RNA-DNA hybrids created by RNA polymerase II, that form R-loop in transcription terminal regions, an important step in proper transcription termination. May also play a role in the metabolism of small nucleolar ribonucleoprotein (snoRNPs). The protein is Survival motor neuron protein (SMN1) of Homo sapiens (Human).